Here is an 861-residue protein sequence, read N- to C-terminus: Probable linoleate 9S-lipoxygenase 3 (861 aa).

The PLAT domain occupies 33–160 (FTDLASSLTG…NYKSDRIFFA (128 aa)). The Lipoxygenase domain occupies 163–861 (PYLPSDTPEL…GKGIPNSVSI (699 aa)). The segment at 220 to 247 (TLGGSAEYPYPRRGRTGRPPTRTDPKSE) is disordered. Fe cation-binding residues include histidine 522, histidine 527, histidine 713, asparagine 717, and isoleucine 861.

The protein belongs to the lipoxygenase family. As to quaternary structure, monomer. Fe cation is required as a cofactor. As to expression, expressed in tubers and roots. Not detected in leaves, flowers, stems, shoot tips, or axillary buds.

The protein localises to the cytoplasm. The catalysed reaction is (9Z,12Z)-octadecadienoate + O2 = (9S)-hydroperoxy-(10E,12Z)-octadecadienoate. The protein operates within lipid metabolism; oxylipin biosynthesis. Functionally, plant lipoxygenases may be involved in a number of diverse aspects of plant physiology including growth and development, pest resistance, and senescence or responses to wounding. Catalyzes the hydroperoxidation of lipids containing a cis,cis-1,4-pentadiene structure. This is Probable linoleate 9S-lipoxygenase 3 (LOX1.3) from Solanum tuberosum (Potato).